The following is a 702-amino-acid chain: Polyribonucleotide nucleotidyltransferase (702 aa).

2 residues coordinate Mg(2+): Asp-485 and Asp-491. Positions 552 to 611 constitute a KH domain; it reads PKTSTLQIDPEKIRDVIGAGGKVINKIIADTGVKIDIKEDGLVYVSSAESEGVKEAVKII. The S1 motif domain maps to 621 to 689; sequence GEIYLGKVTK…SQGRINLSRK (69 aa).

This sequence belongs to the polyribonucleotide nucleotidyltransferase family. It depends on Mg(2+) as a cofactor.

Its subcellular location is the cytoplasm. It carries out the reaction RNA(n+1) + phosphate = RNA(n) + a ribonucleoside 5'-diphosphate. Functionally, involved in mRNA degradation. Catalyzes the phosphorolysis of single-stranded polyribonucleotides processively in the 3'- to 5'-direction. The sequence is that of Polyribonucleotide nucleotidyltransferase from Clostridium perfringens (strain ATCC 13124 / DSM 756 / JCM 1290 / NCIMB 6125 / NCTC 8237 / Type A).